A 391-amino-acid polypeptide reads, in one-letter code: 3-ketoacyl-CoA thiolase (391 aa).

Catalysis depends on Cys-95, which acts as the Acyl-thioester intermediate. Residues His-347 and Cys-377 each act as proton acceptor in the active site.

It belongs to the thiolase-like superfamily. Thiolase family. Heterotetramer of two alpha chains (FadB) and two beta chains (FadA).

It is found in the cytoplasm. It carries out the reaction an acyl-CoA + acetyl-CoA = a 3-oxoacyl-CoA + CoA. It functions in the pathway lipid metabolism; fatty acid beta-oxidation. Functionally, catalyzes the final step of fatty acid oxidation in which acetyl-CoA is released and the CoA ester of a fatty acid two carbons shorter is formed. This chain is 3-ketoacyl-CoA thiolase, found in Marinomonas sp. (strain MWYL1).